A 715-amino-acid chain; its full sequence is ATP-dependent RecD2 DNA helicase (715 aa).

A not required for helicase activity region spans residues Met-1 to Trp-150. ATP is bound by residues Gln-343 and Gly-363–Ser-367. 2 consecutive DNA-binding regions follow at residues Gly-391 and Thr-407 to Tyr-414. Gln-466 provides a ligand contact to ATP. A DNA-binding region is located at residue Val-470. An ATP-binding site is contributed by Arg-493. 3 consecutive DNA-binding regions follow at residues Arg-554–Lys-555, Asn-596–Asn-604, and Thr-644–Arg-647. ATP is bound at residue Arg-679.

The protein belongs to the RecD family. RecD2 subfamily. Monomer; homodimers seem to be inactive.

It carries out the reaction Couples ATP hydrolysis with the unwinding of duplex DNA at the replication fork by translocating in the 5'-3' direction. This creates two antiparallel DNA single strands (ssDNA). The leading ssDNA polymer is the template for DNA polymerase III holoenzyme which synthesizes a continuous strand.. The catalysed reaction is ATP + H2O = ADP + phosphate + H(+). In terms of biological role, DNA-dependent ATPase (ssDNA stimulates the ATPase better than dsDNA) and ATP-dependent 5'-3' DNA helicase. Plays a role in an antioxidant pathway. Involved in DNA damage repair and/or recombination. Appears to move along DNA in single base steps, powered by hydrolysis of 1 molecule of ATP. Has low processivity, unwinds about 15-20 base pairs/second. Short (20 bp) substrates with 5'-overhangs or forked ends are the best substrates, is much less efficient on 52 or 76 bp substrates with 5'-overhangs. The presence of single-stranded DNA-binding protein (SSB) increases unwinding 4-5 fold. Has no activity on blunt DNA or DNA with 3'-overhangs. Requires at least 10 bases of 5'-ssDNA for helicase activity. In Deinococcus radiodurans (strain ATCC 13939 / DSM 20539 / JCM 16871 / CCUG 27074 / LMG 4051 / NBRC 15346 / NCIMB 9279 / VKM B-1422 / R1), this protein is ATP-dependent RecD2 DNA helicase.